A 70-amino-acid polypeptide reads, in one-letter code: Putative membrane protein insertion efficiency factor (70 aa).

The protein belongs to the UPF0161 family.

The protein localises to the cell membrane. Could be involved in insertion of integral membrane proteins into the membrane. The protein is Putative membrane protein insertion efficiency factor of Symbiobacterium thermophilum (strain DSM 24528 / JCM 14929 / IAM 14863 / T).